The chain runs to 151 residues: Aspartate carbamoyltransferase regulatory chain (151 aa).

4 residues coordinate Zn(2+): cysteine 107, cysteine 112, cysteine 135, and cysteine 138.

Belongs to the PyrI family. Contains catalytic and regulatory chains. It depends on Zn(2+) as a cofactor.

Functionally, involved in allosteric regulation of aspartate carbamoyltransferase. The polypeptide is Aspartate carbamoyltransferase regulatory chain (Thermococcus gammatolerans (strain DSM 15229 / JCM 11827 / EJ3)).